Reading from the N-terminus, the 330-residue chain is ADP-L-glycero-D-manno-heptose-6-epimerase (330 aa).

NADP(+) contacts are provided by residues 11 to 12 (FI), 32 to 33 (DN), K39, K54, 75 to 79 (EGACS), and N92. Y139 (proton acceptor) is an active-site residue. Position 143 (K143) interacts with NADP(+). Residue N168 participates in substrate binding. NADP(+)-binding residues include V169 and K177. K177 serves as the catalytic Proton acceptor. Substrate-binding positions include R179, H186, 200-203 (FGEY), R213, and Y292.

This sequence belongs to the NAD(P)-dependent epimerase/dehydratase family. HldD subfamily. As to quaternary structure, homopentamer. NADP(+) is required as a cofactor.

The catalysed reaction is ADP-D-glycero-beta-D-manno-heptose = ADP-L-glycero-beta-D-manno-heptose. It functions in the pathway nucleotide-sugar biosynthesis; ADP-L-glycero-beta-D-manno-heptose biosynthesis; ADP-L-glycero-beta-D-manno-heptose from D-glycero-beta-D-manno-heptose 7-phosphate: step 4/4. Functionally, catalyzes the interconversion between ADP-D-glycero-beta-D-manno-heptose and ADP-L-glycero-beta-D-manno-heptose via an epimerization at carbon 6 of the heptose. The chain is ADP-L-glycero-D-manno-heptose-6-epimerase from Burkholderia cenocepacia (strain ATCC BAA-245 / DSM 16553 / LMG 16656 / NCTC 13227 / J2315 / CF5610) (Burkholderia cepacia (strain J2315)).